Reading from the N-terminus, the 508-residue chain is Hydroxymethylglutaryl-CoA synthase, mitochondrial (508 aa).

The N-terminal 37 residues, 1 to 37 (MQRLLTPVRQVLQVKRVMQEASLLPARLLPAAHPSFS), are a transit peptide targeting the mitochondrion. N6-succinyllysine is present on K52. Residues E80 and A81 each coordinate (3S)-3-hydroxy-3-methylglutaryl-CoA. The Proton donor/acceptor role is filled by E132. 3 residues coordinate (3S)-3-hydroxy-3-methylglutaryl-CoA: C166, N204, and T208. C166 acts as the Acyl-thioester intermediate in catalysis. K243 carries the post-translational modification N6-acetyllysine. Residue K256 is modified to N6-acetyllysine; alternate. K256 bears the N6-succinyllysine; alternate mark. (3S)-3-hydroxy-3-methylglutaryl-CoA-binding residues include S258 and H301. H301 functions as the Proton donor/acceptor in the catalytic mechanism. Residue K306 is modified to N6-acetyllysine. K310 lines the (3S)-3-hydroxy-3-methylglutaryl-CoA pocket. At K310 the chain carries N6-acetyllysine; alternate. The residue at position 310 (K310) is an N6-succinyllysine; alternate. K333 bears the N6-succinyllysine mark. N6-acetyllysine; alternate occurs at positions 342, 350, 354, and 358. Residues K342, K350, K354, and K358 each carry the N6-succinyllysine; alternate modification. 2 residues coordinate (3S)-3-hydroxy-3-methylglutaryl-CoA: N380 and S414. S433 bears the Phosphoserine mark. K437 is modified (N6-acetyllysine). The residue at position 440 (S440) is a Phosphoserine. Position 447 is an N6-acetyllysine; alternate (K447). K447 carries the N6-succinyllysine; alternate modification. A Phosphoserine modification is found at S456. Residue K473 is modified to N6-acetyllysine; alternate. The residue at position 473 (K473) is an N6-succinyllysine; alternate. A Phosphoserine modification is found at S477.

It belongs to the thiolase-like superfamily. HMG-CoA synthase family. In terms of assembly, homodimer. In terms of processing, succinylated. Desuccinylated by SIRT5. Succinylation, at least at Lys-310, inhibits the enzymatic activity.

It localises to the mitochondrion. It catalyses the reaction acetoacetyl-CoA + acetyl-CoA + H2O = (3S)-3-hydroxy-3-methylglutaryl-CoA + CoA + H(+). The protein operates within metabolic intermediate biosynthesis; (R)-mevalonate biosynthesis; (R)-mevalonate from acetyl-CoA: step 2/3. Functionally, catalyzes the first irreversible step in ketogenesis, condensing acetyl-CoA to acetoacetyl-CoA to form HMG-CoA, which is converted by HMG-CoA reductase (HMGCR) into mevalonate. The polypeptide is Hydroxymethylglutaryl-CoA synthase, mitochondrial (HMGCS2) (Bos taurus (Bovine)).